Reading from the N-terminus, the 213-residue chain is Large ribosomal subunit protein uL3 (213 aa).

Belongs to the universal ribosomal protein uL3 family. As to quaternary structure, part of the 50S ribosomal subunit. Forms a cluster with proteins L14 and L19.

Its function is as follows. One of the primary rRNA binding proteins, it binds directly near the 3'-end of the 23S rRNA, where it nucleates assembly of the 50S subunit. The polypeptide is Large ribosomal subunit protein uL3 (Kosmotoga olearia (strain ATCC BAA-1733 / DSM 21960 / TBF 19.5.1)).